Consider the following 396-residue polypeptide: S-adenosylmethionine synthase (396 aa).

His-16 serves as a coordination point for ATP. Asp-18 is a binding site for Mg(2+). A K(+)-binding site is contributed by Glu-44. L-methionine contacts are provided by Glu-57 and Gln-100. The interval 100–110 is flexible loop; the sequence is QSVDIAQGVDR. Residues 165–167, Asp-240, 246–247, Ala-263, and Lys-267 contribute to the ATP site; these read DAK and RK. Asp-240 is an L-methionine binding site. Lys-271 provides a ligand contact to L-methionine.

Belongs to the AdoMet synthase family. As to quaternary structure, homotetramer; dimer of dimers. Mg(2+) is required as a cofactor. It depends on K(+) as a cofactor.

The protein resides in the cytoplasm. It catalyses the reaction L-methionine + ATP + H2O = S-adenosyl-L-methionine + phosphate + diphosphate. The protein operates within amino-acid biosynthesis; S-adenosyl-L-methionine biosynthesis; S-adenosyl-L-methionine from L-methionine: step 1/1. In terms of biological role, catalyzes the formation of S-adenosylmethionine (AdoMet) from methionine and ATP. The overall synthetic reaction is composed of two sequential steps, AdoMet formation and the subsequent tripolyphosphate hydrolysis which occurs prior to release of AdoMet from the enzyme. This Stutzerimonas stutzeri (strain A1501) (Pseudomonas stutzeri) protein is S-adenosylmethionine synthase.